A 220-amino-acid chain; its full sequence is Iron-sulfur cluster repair protein YtfE (220 aa).

It belongs to the RIC family. YtfE subfamily. Homodimer.

The protein localises to the cytoplasm. Di-iron-containing protein involved in the repair of iron-sulfur clusters damaged by oxidative and nitrosative stress conditions. The protein is Iron-sulfur cluster repair protein YtfE of Salmonella choleraesuis (strain SC-B67).